Consider the following 321-residue polypeptide: MVAAEENPESFFAAAPPLRDADAVAARLGEFIARNSSAAGAGGGGRRIVCVTSGGTTVPLEQRCVRYIDNFSSGHRGAASTEYFLKAGYAVIFLHRRGSCQPYCRFLPDDSFLKFFDVDAESKVQVAECHAPVVKKAIGDYCKAIEGGYLLKLPFTTIFEYLQLLKMVATSISSAGPLGMFYLAAAVSDFYVPWDSMAKHKIQSGGGPLDMRLSQVPKMLSVLRNQWAPLAFCISFKLETDSDILIQKADMALNKYKMNIVVANLLATYKEEVIIVTDKERSTIRKMNKDEDLEMQIIKILSQNHSKYICGSTNGCVQSPY.

The protein belongs to the PPC synthetase family. In terms of assembly, homodimer.

It catalyses the reaction (R)-4'-phosphopantothenate + L-cysteine + CTP = N-[(R)-4-phosphopantothenoyl]-L-cysteine + CMP + diphosphate + H(+). The protein operates within cofactor biosynthesis; coenzyme A biosynthesis; CoA from (R)-pantothenate: step 2/5. In terms of biological role, catalyzes the first step in the biosynthesis of coenzyme A from vitamin B5, where cysteine is conjugated to 4'-phosphopantothenate to form 4-phosphopantothenoylcysteine. This Oryza sativa subsp. japonica (Rice) protein is Phosphopantothenate--cysteine ligase 1.